A 277-amino-acid chain; its full sequence is Probable endonuclease 4 (277 aa).

9 residues coordinate Zn(2+): His-67, His-107, Glu-142, Asp-176, His-179, His-211, Asp-224, His-226, and Glu-256.

It belongs to the AP endonuclease 2 family. The cofactor is Zn(2+).

It carries out the reaction Endonucleolytic cleavage to 5'-phosphooligonucleotide end-products.. Endonuclease IV plays a role in DNA repair. It cleaves phosphodiester bonds at apurinic or apyrimidinic (AP) sites, generating a 3'-hydroxyl group and a 5'-terminal sugar phosphate. In Clostridium beijerinckii (strain ATCC 51743 / NCIMB 8052) (Clostridium acetobutylicum), this protein is Probable endonuclease 4.